A 287-amino-acid polypeptide reads, in one-letter code: MNAKILFKIANSFLLYDLSTKSQFNAVIRKKLKQEDRIITVGDNVEFVKDQYEYVIEKIDERKNLLIRPKVANIDTLIIVNSVKEPDFSSYGLNKFLAFYEARNINNVIIYFSKMDLLNKQESKNMNQIISQYEQNGYIVLNSLDKEKNKEKILNMIKNNVVCFAGQSGVGKSTLINFLIPDLELRTQEISQALNRGKHTTTSSLMIPFNEGFVIDTPGFGSLDLNMTQLELANSFTDFRNNSVHCKFKNCLHTNEQNCFIKKMVDENKIYKQRYLDYLKMFSEIKK.

In terms of domain architecture, CP-type G spans 63 to 223; the sequence is KNLLIRPKVA…VIDTPGFGSL (161 aa). GTP contacts are provided by residues 113–116 and 166–174; these read SKMD and GQSGVGKST. Cys246, Cys251, His253, and Cys259 together coordinate Zn(2+).

Belongs to the TRAFAC class YlqF/YawG GTPase family. RsgA subfamily. As to quaternary structure, monomer. Associates with 30S ribosomal subunit, binds 16S rRNA. The cofactor is Zn(2+).

It localises to the cytoplasm. In terms of biological role, one of several proteins that assist in the late maturation steps of the functional core of the 30S ribosomal subunit. Helps release RbfA from mature subunits. May play a role in the assembly of ribosomal proteins into the subunit. Circularly permuted GTPase that catalyzes slow GTP hydrolysis, GTPase activity is stimulated by the 30S ribosomal subunit. The protein is Small ribosomal subunit biogenesis GTPase RsgA of Malacoplasma penetrans (strain HF-2) (Mycoplasma penetrans).